The primary structure comprises 713 residues: Macrophage-expressed gene 1 protein (713 aa).

A signal peptide spans Met-1–Ala-19. The MACPF domain occupies Gly-30–Asn-345. Cys-34 and Cys-70 form a disulfide bridge. The next 2 membrane-spanning stretches (beta stranded) occupy residues Leu-113–Ala-120 and Gly-127–Glu-132. N-linked (GlcNAc...) asparagine glycosylation is present at Asn-185. 2 consecutive transmembrane segments (beta stranded) span residues Thr-235 to Phe-244 and Val-248 to Tyr-256. Asn-269 carries N-linked (GlcNAc...) asparagine glycosylation. Cys-350 and Cys-369 are oxidised to a cystine. The N-linked (GlcNAc...) asparagine glycan is linked to Asn-375. Disulfide bonds link Cys-385–Cys-394, Cys-432–Cys-446, Cys-436–Cys-442, Cys-531–Cys-569, and Cys-554–Cys-574. The P2 stretch occupies residues Pro-410–Glu-653. The chain crosses the membrane as a helical span at residues Ala-654 to Tyr-674.

The protein belongs to the MPEG1 family. Homooligomer; predominantly forms a homooligomeric arc-shaped pore complex instead of complete rings of 16 subunits. Proteolytically processed in two steps to generate the Macrophage-expressed gene 1 protein, processed form: cleaved by trypsin in proximity of the helical transmembrane domain releases the ectodomain into the lysosomal lumen to orient the pore-forming domain toward the endogenous membranes, and processed by the asparagine endopeptidase (LGMN). Proteolytic processing in antigen-containing vesicles is pH-dependent. In terms of processing, monoubiquitinated in response to bacterial infection; ubiquitination is required for vesicular localization and antibacterial activity and can be blocked by bacterial cell cycle inhibiting factor (cif). In terms of tissue distribution, expressed constitutively in a variety of cell types including macrophages, microglia, neutrophils, T cells, marginal zone B cells, keratinocytes, splenocytes and intestinal epithelial cells.

The protein resides in the cytoplasmic vesicle membrane. It is found in the cytoplasmic vesicle. Its subcellular location is the phagosome membrane. With respect to regulation, forms arc- and ring-shaped pre-pores on top of the membrane at neutral to slightly acidic pH conditions and converts to pores upon acidification. Undergoes transition from the pre-pore to the pore in a processive clockwise hand-over-hand process. In the pore state, 2 alpha-helical regions refold into transmembrane hairpins (TMH1 and TMH2) in each protomer that form in the ensemble complex giant beta-barrel transmembrane pores. Functionally, pore-forming protein involved in both innate and adaptive immunity. Plays a central role in antigen cross-presentation in dendritic cells by forming a pore in antigen-containing compartments, thereby promoting delivery of antigens for cross-presentation. Also involved in innate immune response following bacterial infection; shows antibacterial activity against a wide spectrum of Gram-positive, Gram-negative and acid-fast bacteria. Reduces the viability of the intracytosolic pathogen L.monocytogenes by inhibiting acidification of the phagocytic vacuole of host cells which restricts bacterial translocation from the vacuole to the cytosol. Required for the antibacterial activity of reactive oxygen species and nitric oxide. Pore-forming protein that plays a central role in antigen cross-presentation in dendritic cells by mediating delivery of antigens for cross-presentation. Dendritic cells bridge innate and adaptive immunity by capturing exogenous antigens on MHC class-I molecules and presenting them to naive CD8(+) T-cells. Acts by forming a pore in antigen-containing compartments, promoting the release of antigens into the cytosol, enabling generation of MHCI:peptide complexes and T-cell priming. The polypeptide is Macrophage-expressed gene 1 protein (Mus musculus (Mouse)).